The sequence spans 246 residues: Large ribosomal subunit protein uL3 (246 aa).

Residue Q151 is modified to N5-methylglutamine.

This sequence belongs to the universal ribosomal protein uL3 family. Part of the 50S ribosomal subunit. Forms a cluster with proteins L14 and L19. Methylated by PrmB.

In terms of biological role, one of the primary rRNA binding proteins, it binds directly near the 3'-end of the 23S rRNA, where it nucleates assembly of the 50S subunit. This Bartonella bacilliformis (strain ATCC 35685 / KC583 / Herrer 020/F12,63) protein is Large ribosomal subunit protein uL3.